Here is a 236-residue protein sequence, read N- to C-terminus: Transcriptional activator protein SolR (236 aa).

An HTH luxR-type domain is found at 169 to 234 (VPESSAALTA…QAVVKAIAIG (66 aa)). Positions 193–212 (AYEIGQILRISERTVNFHVN) form a DNA-binding region, H-T-H motif.

Belongs to the autoinducer-regulated transcriptional regulatory protein family.

This Ralstonia nicotianae (strain ATCC BAA-1114 / GMI1000) (Ralstonia solanacearum) protein is Transcriptional activator protein SolR (solR).